Consider the following 48-residue polypeptide: Delta-stichotoxin-Hmg4b (48 aa).

3 disulfide bridges follow: C3/C43, C5/C33, and C26/C44.

Belongs to the sea anemone sodium channel inhibitory toxin family. Type II subfamily.

The protein localises to the secreted. It is found in the nematocyst. In terms of biological role, binds specifically to voltage-gated sodium channels (Nav), thereby delaying their inactivation during signal transduction. Its toxicity is greater than that of RpII (AC P01534). The polypeptide is Delta-stichotoxin-Hmg4b (Heteractis magnifica (Magnificent sea anemone)).